A 181-amino-acid chain; its full sequence is Endoribonuclease YbeY (181 aa).

Positions 115, 119, and 125 each coordinate Zn(2+).

The protein belongs to the endoribonuclease YbeY family. Requires Zn(2+) as cofactor.

Its subcellular location is the cytoplasm. Single strand-specific metallo-endoribonuclease involved in late-stage 70S ribosome quality control and in maturation of the 3' terminus of the 16S rRNA. The sequence is that of Endoribonuclease YbeY from Bifidobacterium animalis subsp. lactis (strain AD011).